The chain runs to 388 residues: Chorismate synthase (388 aa).

NADP(+) is bound by residues arginine 39 and arginine 45. Residues 130–132 (RSS), 251–252 (NA), alanine 296, 311–315 (KPIPT), and arginine 337 contribute to the FMN site.

It belongs to the chorismate synthase family. Homotetramer. FMNH2 is required as a cofactor.

It carries out the reaction 5-O-(1-carboxyvinyl)-3-phosphoshikimate = chorismate + phosphate. It participates in metabolic intermediate biosynthesis; chorismate biosynthesis; chorismate from D-erythrose 4-phosphate and phosphoenolpyruvate: step 7/7. Catalyzes the anti-1,4-elimination of the C-3 phosphate and the C-6 proR hydrogen from 5-enolpyruvylshikimate-3-phosphate (EPSP) to yield chorismate, which is the branch point compound that serves as the starting substrate for the three terminal pathways of aromatic amino acid biosynthesis. This reaction introduces a second double bond into the aromatic ring system. In Streptococcus equi subsp. zooepidemicus (strain H70), this protein is Chorismate synthase.